The sequence spans 269 residues: Phosphatidylglycerophosphate phosphatase 1, chloroplastic (269 aa).

The N-terminal 33 residues, 1–33, are a transit peptide targeting the chloroplast; it reads MRSVPGPSPPCTRSLAHSCRAAARGPCGSARPR. The tract at residues 25–46 is disordered; sequence GPCGSARPRARSVSARAHSSEA. The span at 29–46 shows a compositional bias: low complexity; that stretch reads SARPRARSVSARAHSSEA. Residues 103-107 carry the Phosphoryl acceptor motif; that stretch reads DKDNT.

Belongs to the HAD-like hydrolase superfamily.

Its subcellular location is the plastid. The protein resides in the chloroplast. It carries out the reaction a 1,2-diacyl-sn-glycero-3-phospho-(1'-sn-glycero-3'-phosphate) + H2O = a 1,2-diacyl-sn-glycero-3-phospho-(1'-sn-glycerol) + phosphate. It participates in phospholipid metabolism; phosphatidylglycerol biosynthesis; phosphatidylglycerol from CDP-diacylglycerol: step 2/2. Its function is as follows. Phosphatidylglycerophosphate phosphatase involved in the biosynthesis of phosphatidylglycerol (PG), a phosphoglycerolipid predominantly present in chloroplastic thylakoid membranes and which has important photosynthetic function. Required for thylakoid membranes development and chloroplast function. This is Phosphatidylglycerophosphate phosphatase 1, chloroplastic from Chlamydomonas reinhardtii (Chlamydomonas smithii).